Reading from the N-terminus, the 296-residue chain is Putative S-adenosyl-L-methionine-dependent methyltransferase MAV_4764 (296 aa).

S-adenosyl-L-methionine-binding positions include Asp-121 and 150-151 (DL).

This sequence belongs to the UPF0677 family.

Exhibits S-adenosyl-L-methionine-dependent methyltransferase activity. In Mycobacterium avium (strain 104), this protein is Putative S-adenosyl-L-methionine-dependent methyltransferase MAV_4764.